A 657-amino-acid chain; its full sequence is Sodium/glucose cotransporter 4 (657 aa).

The Extracellular portion of the chain corresponds to 1 to 24; sequence MPASPEPVTATPEPEEVPAKFTLE. Residues 25–45 traverse the membrane as a helical segment; sequence AADIAVVVVYFVFVLAVGIWS. At 46 to 79 the chain is on the cytoplasmic side; the sequence is SIRANRGTVGGYFLAGRSMTWWPIGASLMSSNVG. A helical transmembrane segment spans residues 80–100; that stretch reads SGLFIGLAGTGAAGGLAVGGF. Topologically, residues 101 to 104 are extracellular; that stretch reads EWNA. Residues 105 to 125 form a helical membrane-spanning segment; it reads AWVLIALGWIFVPVYISAGVV. Residues 126–147 lie on the Cytoplasmic side of the membrane; sequence TMPEYLRKRFGGQRIRIYMSVL. Residues 148–168 traverse the membrane as a helical segment; the sequence is SLILYILTKISTDIFSGALFI. Over 169-180 the chain is Extracellular; the sequence is QVSLGWDLYLST. Residues 181–201 traverse the membrane as a helical segment; the sequence is VILLAVTALYTIAGGLTAVIY. Topologically, residues 202–207 are cytoplasmic; sequence TDALQT. A helical membrane pass occupies residues 208–228; it reads VIMVIGAFVLMFIAFDKVGWY. The Extracellular segment spans residues 229–265; sequence EGLLVQYEKAAPALTVPNTTCHLPRSDAFHIFRDPVT. N-linked (GlcNAc...) asparagine glycosylation occurs at N246. Residues 266–286 form a helical membrane-spanning segment; that stretch reads GDIPWPGLIFGLTVLATWVWC. Over 287–307 the chain is Cytoplasmic; sequence TDQVIVQRSLSAKNLSHAKAG. The helical transmembrane segment at 308 to 328 threads the bilayer; that stretch reads SVLGGYLKVFPMFFVVMPGMI. At 329-373 the chain is on the extracellular side; that stretch reads SRALYPDEVACVDPDECQKICGAKVGCSNIAYPKLVVELMPVGMR. A helical membrane pass occupies residues 374 to 396; sequence GLMIAVMMAALMSSLTSIFNSSS. Residues 397–417 lie on the Cytoplasmic side of the membrane; that stretch reads TLFTMDIWQRIRPRASEKELM. Residues 418–438 traverse the membrane as a helical segment; the sequence is VVGRVFILLLVALSIVWIPVI. Residues 439–451 are Extracellular-facing; that stretch reads QTANSGQLFDYIQ. The chain crosses the membrane as a helical span at residues 452-472; it reads AITSFLSPPITTVFIMAIFWG. Over 473-478 the chain is Cytoplasmic; the sequence is RVNEQG. The helical transmembrane segment at 479–499 threads the bilayer; the sequence is AFWGLMVGLVVGMVRMIMEFV. At 500–520 the chain is on the extracellular side; it reads YGTPSCGETDLRPSLLKDVHY. A helical membrane pass occupies residues 521–541; it reads LYFALILLALTVLIITAVSLC. Topologically, residues 542-636 are cytoplasmic; it reads TAPIPEKHLV…SIEEDHMWKT (95 aa). The helical transmembrane segment at 637-657 threads the bilayer; the sequence is VCNVNALILLTANVFLWGYFA.

This sequence belongs to the sodium:solute symporter (SSF) (TC 2.A.21) family.

Its subcellular location is the membrane. In terms of biological role, probable sodium-dependent sugar transporter. This is Sodium/glucose cotransporter 4 (slc5a9) from Danio rerio (Zebrafish).